Consider the following 37-residue polypeptide: MKVRPSVRKICDKCCLIRRHRKLLVICSNPKHKQRQG.

The protein belongs to the bacterial ribosomal protein bL36 family.

Its subcellular location is the plastid. The protein localises to the chloroplast. The polypeptide is Large ribosomal subunit protein bL36c (rpl36) (Nephroselmis olivacea (Green alga)).